We begin with the raw amino-acid sequence, 239 residues long: Serine protease SplF (239 aa).

Positions 1–36 (MNKNIIIKSIGALTILTSITGVGTTMVEGIQQTAKA) are cleaved as a signal peptide. Catalysis depends on charge relay system residues H75, D114, and S192.

Belongs to the peptidase S1B family.

The protein localises to the secreted. The sequence is that of Serine protease SplF (splF) from Staphylococcus aureus (strain USA300).